A 180-amino-acid chain; its full sequence is Acireductone dioxygenase (180 aa).

Positions 97, 99, 103, and 141 each coordinate Fe(2+). Histidine 97, histidine 99, glutamate 103, and histidine 141 together coordinate Ni(2+).

The protein belongs to the acireductone dioxygenase (ARD) family. In terms of assembly, monomer. Fe(2+) serves as cofactor. The cofactor is Ni(2+).

It catalyses the reaction 1,2-dihydroxy-5-(methylsulfanyl)pent-1-en-3-one + O2 = 3-(methylsulfanyl)propanoate + CO + formate + 2 H(+). It carries out the reaction 1,2-dihydroxy-5-(methylsulfanyl)pent-1-en-3-one + O2 = 4-methylsulfanyl-2-oxobutanoate + formate + 2 H(+). The protein operates within amino-acid biosynthesis; L-methionine biosynthesis via salvage pathway; L-methionine from S-methyl-5-thio-alpha-D-ribose 1-phosphate: step 5/6. Its function is as follows. Catalyzes 2 different reactions between oxygen and the acireductone 1,2-dihydroxy-3-keto-5-methylthiopentene (DHK-MTPene) depending upon the metal bound in the active site. Fe-containing acireductone dioxygenase (Fe-ARD) produces formate and 2-keto-4-methylthiobutyrate (KMTB), the alpha-ketoacid precursor of methionine in the methionine recycle pathway. Ni-containing acireductone dioxygenase (Ni-ARD) produces methylthiopropionate, carbon monoxide and formate, and does not lie on the methionine recycle pathway. This chain is Acireductone dioxygenase, found in Cronobacter sakazakii (strain ATCC BAA-894) (Enterobacter sakazakii).